We begin with the raw amino-acid sequence, 384 residues long: Succinate--CoA ligase [ADP-forming] subunit beta (384 aa).

An ATP-grasp domain is found at K9–E242. ATP contacts are provided by residues K45, G52–G54, E98, L101, and E106. Mg(2+) is bound by residues N197 and D211. Substrate is bound by residues N262 and G319 to L321.

This sequence belongs to the succinate/malate CoA ligase beta subunit family. In terms of assembly, heterotetramer of two alpha and two beta subunits. Mg(2+) is required as a cofactor.

The catalysed reaction is succinate + ATP + CoA = succinyl-CoA + ADP + phosphate. The enzyme catalyses GTP + succinate + CoA = succinyl-CoA + GDP + phosphate. The protein operates within carbohydrate metabolism; tricarboxylic acid cycle; succinate from succinyl-CoA (ligase route): step 1/1. In terms of biological role, succinyl-CoA synthetase functions in the citric acid cycle (TCA), coupling the hydrolysis of succinyl-CoA to the synthesis of either ATP or GTP and thus represents the only step of substrate-level phosphorylation in the TCA. The beta subunit provides nucleotide specificity of the enzyme and binds the substrate succinate, while the binding sites for coenzyme A and phosphate are found in the alpha subunit. In Solibacter usitatus (strain Ellin6076), this protein is Succinate--CoA ligase [ADP-forming] subunit beta.